We begin with the raw amino-acid sequence, 123 residues long: Protein Wnt-7b (123 aa).

Ser-1 is lipidated: O-palmitoleoyl serine; by PORCN. The tract at residues 33–61 (VEAVRATRLRQPTFLKIKKPRTYRKPMVT) is disordered linker. Cys-89 and Cys-104 are disulfide-bonded. An N-linked (GlcNAc...) asparagine glycan is attached at Asn-90.

It belongs to the Wnt family. In terms of processing, palmitoleoylation is required for efficient binding to frizzled receptors. Depalmitoleoylation leads to Wnt signaling pathway inhibition.

It localises to the secreted. The protein localises to the extracellular space. Its subcellular location is the extracellular matrix. Ligand for members of the frizzled family of seven transmembrane receptors that functions in the canonical Wnt/beta-catenin signaling pathway. Required for normal fusion of the chorion and the allantois during placenta development. Required for central nervous system (CNS) angiogenesis and blood-brain barrier regulation. In Alopias vulpinus (Common thresher shark), this protein is Protein Wnt-7b (WNT-7B).